The primary structure comprises 809 residues: uncharacterized protein (809 aa).

Residues 19–206 (HDLRLVLVAS…FTGMSAITIV (188 aa)) form the MHYT domain. 7 helical membrane passes run 23 to 43 (LVLVASAVCLAGCFTTFRLYS), 57 to 77 (LLLTGLVAGSSVWATHFIAMV), 92 to 112 (TLLSLMIAALFMASGFAVASA), 122 to 142 (GGVLIGLGVAAMHYMGMSAFV), 152 to 172 (ATVGMSAVLGVGGATAALLLA), 186 to 206 (GMLCLGIVMLHFTGMSAITIV), and 224 to 244 (TLAVGSITSMIILGGLGAVAI). The region spanning 254-317 (ERIRRLANAA…ADPSREDVRR (64 aa)) is the PAS domain. In terms of domain architecture, GGDEF spans 402–536 (ESLAVICIDL…GRGVYRFFKR (135 aa)). In terms of domain architecture, EAL spans 545-795 (RRNLARDLRQ…ALTMWTTAGD (251 aa)).

The protein resides in the cell membrane. This is an uncharacterized protein from Caulobacter vibrioides (strain ATCC 19089 / CIP 103742 / CB 15) (Caulobacter crescentus).